Consider the following 121-residue polypeptide: Small ribosomal subunit protein uS13 (121 aa).

Positions 93–121 are disordered; the sequence is RGLPMRGQRTRTNARTRKGPRKGAAALKK.

It belongs to the universal ribosomal protein uS13 family. In terms of assembly, part of the 30S ribosomal subunit. Forms a loose heterodimer with protein S19. Forms two bridges to the 50S subunit in the 70S ribosome.

Located at the top of the head of the 30S subunit, it contacts several helices of the 16S rRNA. In the 70S ribosome it contacts the 23S rRNA (bridge B1a) and protein L5 of the 50S subunit (bridge B1b), connecting the 2 subunits; these bridges are implicated in subunit movement. Contacts the tRNAs in the A and P-sites. In Acidovorax ebreus (strain TPSY) (Diaphorobacter sp. (strain TPSY)), this protein is Small ribosomal subunit protein uS13.